The chain runs to 109 residues: Nucleoid-associated protein Shal_1591 (109 aa).

The interval 87–109 (NQKEKMAEVTGGMQLPPGMKMPF) is disordered.

Belongs to the YbaB/EbfC family. Homodimer.

It is found in the cytoplasm. The protein localises to the nucleoid. Its function is as follows. Binds to DNA and alters its conformation. May be involved in regulation of gene expression, nucleoid organization and DNA protection. In Shewanella halifaxensis (strain HAW-EB4), this protein is Nucleoid-associated protein Shal_1591.